A 608-amino-acid polypeptide reads, in one-letter code: Kelch-like protein 10 (608 aa).

Residues 39–106 form the BTB domain; sequence CDVVIKVNGF…AYTRTVPITP (68 aa). 6 Kelch repeats span residues 292 to 339, 340 to 386, 388 to 433, 434 to 480, 481 to 527, and 529 to 574; these read ILFA…YLKG, YVYI…VLSN, IYAM…TLYG, KVYI…AYGE, HVYA…VVDD, and LFVV…VVPG. The residue at position 501 (serine 501) is a Phosphoserine.

Self-associates. Interacts with CUL3; indicative for the participation in an E3 ubiquitin ligase complex. As to expression, testis specific.

It is found in the cytoplasm. It functions in the pathway protein modification; protein ubiquitination. In terms of biological role, may be a substrate-specific adapter of a CUL3-based E3 ubiquitin-protein ligase complex which mediates the ubiquitination and subsequent proteasomal degradation of target proteins during spermatogenesis. Required for male fertility. This Mus musculus (Mouse) protein is Kelch-like protein 10 (Klhl10).